Here is a 306-residue protein sequence, read N- to C-terminus: Pantothenate kinase (306 aa).

90–97 is an ATP binding site; that stretch reads GSVAVGKS.

This sequence belongs to the prokaryotic pantothenate kinase family.

Its subcellular location is the cytoplasm. It carries out the reaction (R)-pantothenate + ATP = (R)-4'-phosphopantothenate + ADP + H(+). Its pathway is cofactor biosynthesis; coenzyme A biosynthesis; CoA from (R)-pantothenate: step 1/5. This chain is Pantothenate kinase, found in Listeria monocytogenes serotype 4a (strain HCC23).